The sequence spans 200 residues: GTP-binding protein rho2 (200 aa).

GTP is bound at residue G15–T22. Positions Y37–Y45 match the Effector region motif. Residues D62–Q66 and M120–D123 contribute to the GTP site. C197 carries the post-translational modification Cysteine methyl ester. Residue C197 is the site of S-geranylgeranyl cysteine attachment. Residues I198 to S200 constitute a propeptide, removed in mature form.

The protein belongs to the small GTPase superfamily. Rho family. As to quaternary structure, interacts with pck2.

The protein localises to the cell membrane. In terms of biological role, involved in cell morphogenesis, the maintenance of growth direction, control of polarity and of cell wall integrity. Regulates the synthesis of alpha-D-glucan through activation of pck2. This chain is GTP-binding protein rho2 (rho2), found in Schizosaccharomyces pombe (strain 972 / ATCC 24843) (Fission yeast).